The primary structure comprises 339 residues: RNA 3'-terminal phosphate cyclase (339 aa).

Residues aspartate 109 and 286–290 (HLADQ) each bind ATP. Histidine 310 (tele-AMP-histidine intermediate) is an active-site residue.

Belongs to the RNA 3'-terminal cyclase family. Type 1 subfamily.

The protein localises to the cytoplasm. The catalysed reaction is a 3'-end 3'-phospho-ribonucleotide-RNA + ATP = a 3'-end 2',3'-cyclophospho-ribonucleotide-RNA + AMP + diphosphate. Functionally, catalyzes the conversion of 3'-phosphate to a 2',3'-cyclic phosphodiester at the end of RNA. The mechanism of action of the enzyme occurs in 3 steps: (A) adenylation of the enzyme by ATP; (B) transfer of adenylate to an RNA-N3'P to produce RNA-N3'PP5'A; (C) and attack of the adjacent 2'-hydroxyl on the 3'-phosphorus in the diester linkage to produce the cyclic end product. The biological role of this enzyme is unknown but it is likely to function in some aspects of cellular RNA processing. This Halobacterium salinarum (strain ATCC 29341 / DSM 671 / R1) protein is RNA 3'-terminal phosphate cyclase.